A 329-amino-acid polypeptide reads, in one-letter code: Peroxidase 30 (329 aa).

An N-terminal signal peptide occupies residues 1–27; sequence MKTMTQLNIAVVVVVTVLIGMLRSSEA. 4 disulfides stabilise this stretch: Cys38–Cys116, Cys71–Cys76, Cys122–Cys324, and Cys201–Cys234. Catalysis depends on His69, which acts as the Proton acceptor. Ca(2+)-binding residues include Asp70, Val73, Gly75, Asp77, and Ser79. N-linked (GlcNAc...) asparagine glycans are attached at residues Asn83 and Asn155. Positions 141–165 are disordered; the sequence is SWSVPTGRRDGRISNKTEATNNIPP. The span at 156–165 shows a compositional bias: polar residues; it reads KTEATNNIPP. Residue Pro164 coordinates substrate. N-linked (GlcNAc...) asparagine glycosylation is present at Asn169. Residue His194 participates in heme b binding. Thr195 serves as a coordination point for Ca(2+). Residues Asn210 and Asn240 are each glycosylated (N-linked (GlcNAc...) asparagine). Ca(2+)-binding residues include Asp247, Ser250, and Asp255. Asn290 carries an N-linked (GlcNAc...) asparagine glycan.

Belongs to the peroxidase family. Classical plant (class III) peroxidase subfamily. It depends on heme b as a cofactor. Ca(2+) is required as a cofactor. In terms of tissue distribution, mainly expressed in roots.

The protein resides in the secreted. The enzyme catalyses 2 a phenolic donor + H2O2 = 2 a phenolic radical donor + 2 H2O. Removal of H(2)O(2), oxidation of toxic reductants, biosynthesis and degradation of lignin, suberization, auxin catabolism, response to environmental stresses such as wounding, pathogen attack and oxidative stress. These functions might be dependent on each isozyme/isoform in each plant tissue. This Arabidopsis thaliana (Mouse-ear cress) protein is Peroxidase 30 (PER30).